The chain runs to 33 residues: NAD-reducing hydrogenase HoxS subunit gamma (33 aa).

One can recognise a 2Fe-2S ferredoxin-type domain in the interval 1–33 (SIEIEIDGVTVTTEESRTLVDVAAEAGVYIPTL).

It belongs to the complex I 75 kDa subunit family. As to quaternary structure, tetramer of an alpha and a gamma subunits (flavin-containing dimer), and a delta and a nickel-containing beta subunits (hydrogenase dimer). [4Fe-4S] cluster serves as cofactor.

It localises to the cytoplasm. It carries out the reaction H2 + NAD(+) = NADH + H(+). Functionally, subunits alpha and gamma of HoxS constitute an NADH--oxidoreductase. This Rhodococcus opacus (Nocardia opaca) protein is NAD-reducing hydrogenase HoxS subunit gamma (hoxU).